The following is a 248-amino-acid chain: PF03932 family protein CutC (248 aa).

Belongs to the CutC family.

It localises to the cytoplasm. The polypeptide is PF03932 family protein CutC (Citrobacter koseri (strain ATCC BAA-895 / CDC 4225-83 / SGSC4696)).